Reading from the N-terminus, the 591-residue chain is CDK5RAP3 protein homolog (591 aa).

Residues 232–250 (RAGAPSSAKGPASSASAPP) show a composition bias toward low complexity. 2 disordered regions span residues 232–252 (RAGA…PPAL) and 269–303 (TAPP…DAGG). Residues 279-303 (AGAGASGQGGGIEIDWGDSGGDAGG) show a composition bias toward gly residues. 3 consecutive short sequence motifs (shuffled ATG8-binding motif) follow at residues 311–314 (IDWD), 334–337 (INWD), and 369–372 (IDWD). The span at 386 to 401 (NNRAGDVAEGEAAASL) shows a compositional bias: low complexity. Residues 386 to 416 (NNRAGDVAEGEAAASLSGGGGGGASSGDPDD) form a disordered region.

The protein belongs to the CDK5RAP3 family. In terms of assembly, substrate adapter component of the UFM1 ribosome E3 ligase (UREL) complex. Interacts with ATG8 family proteins.

Substrate adapter of E3 ligase complexes mediating ufmylation, the covalent attachment of the ubiquitin-like modifier UFM1 to substrate proteins, and which is involved in various processes, such as ribosome recycling and reticulophagy (also called ER-phagy). This is CDK5RAP3 protein homolog from Chlamydomonas reinhardtii (Chlamydomonas smithii).